The following is a 218-amino-acid chain: N-(5'-phosphoribosyl)anthranilate isomerase (218 aa).

Belongs to the TrpF family.

It carries out the reaction N-(5-phospho-beta-D-ribosyl)anthranilate = 1-(2-carboxyphenylamino)-1-deoxy-D-ribulose 5-phosphate. It functions in the pathway amino-acid biosynthesis; L-tryptophan biosynthesis; L-tryptophan from chorismate: step 3/5. The sequence is that of N-(5'-phosphoribosyl)anthranilate isomerase from Rhodopseudomonas palustris (strain HaA2).